The primary structure comprises 146 residues: Large ribosomal subunit protein bL21 (146 aa).

Positions 103–146 are disordered; it reads DGKSPTIGPRPKKEKAVEPVEGASDDKPRRAAKKTAAKTAEDAD. A compositionally biased stretch (basic and acidic residues) spans 116 to 131; the sequence is EKAVEPVEGASDDKPR.

Belongs to the bacterial ribosomal protein bL21 family. In terms of assembly, part of the 50S ribosomal subunit. Contacts protein L20.

Functionally, this protein binds to 23S rRNA in the presence of protein L20. The protein is Large ribosomal subunit protein bL21 of Nitrobacter winogradskyi (strain ATCC 25391 / DSM 10237 / CIP 104748 / NCIMB 11846 / Nb-255).